Consider the following 364-residue polypeptide: Sec-independent protein translocase protein TatC (364 aa).

A run of 7 helical transmembrane segments spans residues 42–62 (IALL…PRIF), 107–127 (MIAA…SFIT), 139–159 (LTFV…AYLT), 160–180 (LSTG…SVLD), 194–214 (IFGL…AGIV), 225–245 (PEIF…DPFT), and 246–266 (MLAL…IGWL). Positions 277 to 364 (TSPYADLDDD…STDVTHGDIT (88 aa)) are disordered. Residues 282-295 (DLDDDETSPLDFDD) show a composition bias toward acidic residues. A compositionally biased stretch (low complexity) spans 301 to 320 (AASAGPAATATSPGTANPPG). Over residues 324 to 344 (PPGTANPVGTANPVGTGSSTP) the composition is skewed to polar residues.

It belongs to the TatC family. The Tat system comprises two distinct complexes: a TatABC complex, containing multiple copies of TatA, TatB and TatC subunits, and a separate TatA complex, containing only TatA subunits. Substrates initially bind to the TatABC complex, which probably triggers association of the separate TatA complex to form the active translocon.

It is found in the cell membrane. Part of the twin-arginine translocation (Tat) system that transports large folded proteins containing a characteristic twin-arginine motif in their signal peptide across membranes. Together with TatB, TatC is part of a receptor directly interacting with Tat signal peptides. The sequence is that of Sec-independent protein translocase protein TatC from Frankia casuarinae (strain DSM 45818 / CECT 9043 / HFP020203 / CcI3).